The chain runs to 139 residues: Ribonuclease P protein component (139 aa).

Residues 120–139 (KPTTGVEYSPKNEKCESVLP) are disordered. Over residues 129 to 139 (PKNEKCESVLP) the composition is skewed to basic and acidic residues.

This sequence belongs to the RnpA family. In terms of assembly, consists of a catalytic RNA component (M1 or rnpB) and a protein subunit.

It carries out the reaction Endonucleolytic cleavage of RNA, removing 5'-extranucleotides from tRNA precursor.. Its function is as follows. RNaseP catalyzes the removal of the 5'-leader sequence from pre-tRNA to produce the mature 5'-terminus. It can also cleave other RNA substrates such as 4.5S RNA. The protein component plays an auxiliary but essential role in vivo by binding to the 5'-leader sequence and broadening the substrate specificity of the ribozyme. This chain is Ribonuclease P protein component, found in Chlamydia caviae (strain ATCC VR-813 / DSM 19441 / 03DC25 / GPIC) (Chlamydophila caviae).